We begin with the raw amino-acid sequence, 215 residues long: Probable transaldolase (215 aa).

Catalysis depends on K83, which acts as the Schiff-base intermediate with substrate.

The protein belongs to the transaldolase family. Type 3B subfamily.

It is found in the cytoplasm. It catalyses the reaction D-sedoheptulose 7-phosphate + D-glyceraldehyde 3-phosphate = D-erythrose 4-phosphate + beta-D-fructose 6-phosphate. It participates in carbohydrate degradation; pentose phosphate pathway; D-glyceraldehyde 3-phosphate and beta-D-fructose 6-phosphate from D-ribose 5-phosphate and D-xylulose 5-phosphate (non-oxidative stage): step 2/3. In terms of biological role, transaldolase is important for the balance of metabolites in the pentose-phosphate pathway. In Pelotomaculum thermopropionicum (strain DSM 13744 / JCM 10971 / SI), this protein is Probable transaldolase.